The following is a 325-amino-acid chain: Probable WRKY transcription factor 11 (325 aa).

Positions 240 to 306 form a DNA-binding region, WRKY; sequence KIADIPPDEY…YEGEHRHNQS (67 aa).

This sequence belongs to the WRKY group II-d family. In young, mature and senescent leaves.

The protein resides in the nucleus. Transcription factor. Interacts specifically with the W box (5'-(T)TGAC[CT]-3'), a frequently occurring elicitor-responsive cis-acting element. Regulates rhizobacterium B.cereus AR156-induced systemic resistance (ISR) to P.syringae pv. tomato DC3000, probably by activating the jasmonic acid (JA)- signaling pathway. This chain is Probable WRKY transcription factor 11 (WRKY11), found in Arabidopsis thaliana (Mouse-ear cress).